Here is a 459-residue protein sequence, read N- to C-terminus: Elongation factor 1-alpha 2 (459 aa).

In terms of domain architecture, tr-type G spans 5–242 (KTHINIVVIG…DCIIPPQRPT (238 aa)). The segment at 14–21 (GHVDSGKS) is G1. Residues 70 to 74 (GITID) form a G2 region. Positions 91-94 (DAPG) are G3. The segment at 153-156 (NKMD) is G4. The interval 194–196 (SGF) is G5. A 5-glutamyl glycerylphosphorylethanolamine mark is found at Glu-301 and Glu-374.

Belongs to the TRAFAC class translation factor GTPase superfamily. Classic translation factor GTPase family. EF-Tu/EF-1A subfamily.

It localises to the cytoplasm. Functionally, this protein promotes the GTP-dependent binding of aminoacyl-tRNA to the A-site of ribosomes during protein biosynthesis. The chain is Elongation factor 1-alpha 2 (eft-2) from Oscheius tipulae.